The sequence spans 496 residues: RNA-binding motif protein, Y chromosome, family 1 member F/J (496 aa).

The RRM domain maps to glycine 8 to lysine 85. 2 disordered regions span residues glutamate 81–proline 345 and lysine 452–tyrosine 496. 2 stretches are compositionally biased toward low complexity: residues proline 97 to glycine 114 and proline 149 to glycine 159. Residues asparagine 175 to methionine 184 show a composition bias toward polar residues. 6 stretches are compositionally biased toward basic and acidic residues: residues arginine 204–glycine 214, aspartate 242–serine 253, alanine 276–tyrosine 289, glycine 313–tyrosine 326, serine 335–proline 345, and glycine 484–tyrosine 496.

As to quaternary structure, interacts with splicing factor proteins SFRS3/SRP20, TRA2B/SFRS10, KHDRBS1/SAM68 and KHDRBS3. In terms of tissue distribution, testis-specific.

The protein localises to the nucleus. Its function is as follows. RNA-binding protein which may be involved in spermatogenesis. Required for sperm development, possibly by participating in pre-mRNA splicing in the testis. In Homo sapiens (Human), this protein is RNA-binding motif protein, Y chromosome, family 1 member F/J (RBMY1F).